A 330-amino-acid chain; its full sequence is Putative glycosyltransferase HI_0258 (330 aa).

Positions 1 to 31 are enriched in basic and acidic residues; sequence MTDRQTDRQTDRQTDRQTDRQTDRQTDRQTD. Residues 1–32 form a disordered region; the sequence is MTDRQTDRQTDRQTDRQTDRQTDRQTDRQTDG. UDP-binding positions include 44 to 49 and 140 to 141; these read SSDHYY and DV. Mn(2+)-binding residues include D140, D142, and H270. 270-276 lines the UDP pocket; that stretch reads HYCGPNK.

This sequence belongs to the glycosyltransferase 8 family.

This is Putative glycosyltransferase HI_0258 from Haemophilus influenzae (strain ATCC 51907 / DSM 11121 / KW20 / Rd).